The primary structure comprises 62 residues: UPF0291 protein CLM_2971 (62 aa).

It belongs to the UPF0291 family.

The protein localises to the cytoplasm. The polypeptide is UPF0291 protein CLM_2971 (Clostridium botulinum (strain Kyoto / Type A2)).